Consider the following 102-residue polypeptide: NADH-quinone oxidoreductase subunit K (102 aa).

3 helical membrane-spanning segments follow: residues leucine 5–leucine 25, isoleucine 31–phenylalanine 51, and leucine 65–phenylalanine 85.

It belongs to the complex I subunit 4L family. NDH-1 is composed of 14 different subunits. Subunits NuoA, H, J, K, L, M, N constitute the membrane sector of the complex.

The protein localises to the cell inner membrane. It catalyses the reaction a quinone + NADH + 5 H(+)(in) = a quinol + NAD(+) + 4 H(+)(out). In terms of biological role, NDH-1 shuttles electrons from NADH, via FMN and iron-sulfur (Fe-S) centers, to quinones in the respiratory chain. The immediate electron acceptor for the enzyme in this species is believed to be ubiquinone. Couples the redox reaction to proton translocation (for every two electrons transferred, four hydrogen ions are translocated across the cytoplasmic membrane), and thus conserves the redox energy in a proton gradient. The chain is NADH-quinone oxidoreductase subunit K from Rhizobium leguminosarum bv. trifolii (strain WSM2304).